Consider the following 815-residue polypeptide: Cell division cycle protein 48 (815 aa).

The tract at residues 1 to 30 is disordered; sequence MNAPSTMTDKKPEVEHLQGENPPKDTYSAE. Positions 8 to 18 are enriched in basic and acidic residues; the sequence is TDKKPEVEHLQ. ATP contacts are provided by residues 267–273, Asn368, His404, and 541–546; these read PGTGKTL and GTGKTL. A disordered region spans residues 794–815; the sequence is DSADSNTNGPSFGNDGADDLYA. The segment covering 795-804 has biased composition (polar residues); the sequence is SADSNTNGPS.

The protein belongs to the AAA ATPase family. In terms of assembly, component of the ribosome quality control complex (RQC), composed of the E3 ubiquitin ligase rkr1/ltn1, rqc1 and mtr1/rqc2, as well as cdc48 and its ubiquitin-binding cofactors. RQC forms a stable complex with 60S ribosomal subunits. Interacts with ubx2 and ubx3. Interacts with lub1. Interacts with rbd2 (via C-terminal SHP box); the interaction is required for rbd2-mediated cleavage of sre1 and sre2.

The protein localises to the cytoplasm. The protein resides in the nucleus. The enzyme catalyses ATP + H2O = ADP + phosphate + H(+). Its activity is regulated as follows. The first ATP-binding region has low ATPase activity. The second ATP-binding region is responsible for ATPase activity. ATP binding to the first ATP-binding region induces intrinsic activity of the second ATP-binding region. While ATP binding to the first ATP-binding region appears to prevent ATP hydrolysis by the second ATP-binding region, ADP-binding to first region promotes the coordinate and cooperative ATPase cycle of the second ATP-binding region. ATP binding to the first ATP-binding region induces a conformational change, promoting the rotation of the first ATP-binding region relative to the second ATP-binding region in the hexamer. Functionally, ATP-dependent chaperone which probably uses the energy provided by ATP hydrolysis to generate mechanical force to unfold substrate proteins, disassemble protein complexes, and disaggregate protein aggregates. By recruiting and promoting the degradation of ubiquitinated proteins, plays a role in the ubiquitin fusion degradation (UFD) pathway. Has a role in the endoplasmic reticulum-associated degradation (ERAD) pathway which mediates the cytoplasmic elimination of misfolded proteins exported from the ER. Involved in spindle disassembly. Component of the ribosome quality control complex (RQC), a ribosome-associated complex that mediates ubiquitination and extraction of incompletely synthesized nascent chains for proteasomal degradation. CDC48 may provide the mechanical force that dislodges the polyubiquitinated nascent peptides from the exit channel. Required for ribophagy, a process which relocalizes ribosomal particles into the vacuole for degradation in response to starvation. Has a role in substrate recognition mediating rbd2-dependent cleavage of sterol regulatory element-binding protein sre1 and sre2. This is Cell division cycle protein 48 from Schizosaccharomyces pombe (strain 972 / ATCC 24843) (Fission yeast).